Here is a 362-residue protein sequence, read N- to C-terminus: Zinc phosphodiesterase ELAC protein 1 (362 aa).

Zn(2+) is bound by residues histidine 62, histidine 64, aspartate 66, histidine 67, histidine 181, aspartate 252, and histidine 312. Aspartate 66 acts as the Proton acceptor in catalysis.

It belongs to the RNase Z family. As to quaternary structure, homodimer. The cofactor is Zn(2+).

It localises to the cytoplasm. Its subcellular location is the cytosol. The protein localises to the nucleus. It catalyses the reaction Endonucleolytic cleavage of RNA, removing extra 3' nucleotides from tRNA precursor, generating 3' termini of tRNAs. A 3'-hydroxy group is left at the tRNA terminus and a 5'-phosphoryl group is left at the trailer molecule.. Zinc phosphodiesterase, which displays some tRNA 3'-processing endonuclease activity. Specifically involved in tRNA repair: acts downstream of the ribosome-associated quality control (RQC) pathway by removing a 2',3'-cyclic phosphate from tRNAs following cleavage by ANKZF1. tRNAs are then processed by TRNT1. In Mus musculus (Mouse), this protein is Zinc phosphodiesterase ELAC protein 1 (Elac1).